Here is a 426-residue protein sequence, read N- to C-terminus: MGLEPFSPDSTIFRDESVLRDGYQPDRLIERDTELEQYQSALKPVINGAPPKNLFLYGQTGVGKTLSSRMVVERLIEDQQNIDGVDVQVIELNCKSLNSSYQVAANLINQFRPPTEQIKPTGYPSGMIYNMLFDELEALDATHCLIVLDEIDAIGNDDDILYKLPRANDNENVEDTLVGVIGISNDFTFRDNLSARVKDSLADEEIHFPPYDANELGNILKQRAGEAFHGTSAQRLDDGSYELQSDILEGDVVPLCAAFAAQDSGSARQALKRLYKAGDLARDEESDVITGAHVRQADEIVERDKVRDELTRLPTQSKLTLYSLLLLEREDETPSKRNRIYERYVMAAKRIDADVRTDRTIHDRLSQLTLKGFLDVDEQNKGPKGGSYYEYEFSIRADLAQEVLQEDERLAELFATDETSTTLDSF.

ATP-binding positions include 62–66 (VGKTL), Tyr-211, and Arg-223.

This sequence belongs to the CDC6/cdc18 family.

Involved in regulation of DNA replication. This chain is ORC1-type DNA replication protein 1 (cdc6a), found in Haloarcula marismortui (strain ATCC 43049 / DSM 3752 / JCM 8966 / VKM B-1809) (Halobacterium marismortui).